Here is a 603-residue protein sequence, read N- to C-terminus: NADPH-dependent diflavin oxidoreductase 1 (603 aa).

The region spanning valine 8–tyrosine 152 is the Flavodoxin-like domain. Residues serine 14–alanine 19, serine 61–glycine 64, leucine 99–asparagine 108, and glutamate 134 contribute to the FMN site. Positions proline 210–glycine 457 constitute an FAD-binding FR-type domain. FAD-binding positions include arginine 358, arginine 388–serine 391, and glycine 429–serine 432. Residues threonine 472, serine 528–arginine 529, and lysine 534–glutamine 538 contribute to the NADP(+) site. Residue tryptophan 603 coordinates FAD.

It belongs to the NADPH-dependent diflavin oxidoreductase NDOR1 family. In the N-terminal section; belongs to the flavodoxin family. The protein in the C-terminal section; belongs to the flavoprotein pyridine nucleotide cytochrome reductase family. Interacts with DRE2; as part of the cytosolic iron-sulfur (Fe-S) protein assembly (CIA) machinery. The cofactor is FAD. FMN serves as cofactor.

The protein localises to the cytoplasm. Its subcellular location is the mitochondrion. It carries out the reaction 2 oxidized [2Fe-2S]-[protein] + NADPH = 2 reduced [2Fe-2S]-[protein] + NADP(+) + H(+). Functionally, NADPH-dependent reductase which is a central component of the cytosolic iron-sulfur (Fe-S) protein assembly (CIA) machinery. Transfers electrons from NADPH via its FAD and FMN prosthetic groups to the [2Fe-2S] cluster of DRE2, another key component of the CIA machinery. In turn, this reduced cluster provides electrons for assembly of cytosolic iron-sulfur cluster proteins. Positively controls H(2)O(2)-induced cell death. The chain is NADPH-dependent diflavin oxidoreductase 1 from Gibberella zeae (strain ATCC MYA-4620 / CBS 123657 / FGSC 9075 / NRRL 31084 / PH-1) (Wheat head blight fungus).